The sequence spans 341 residues: UPF0283 membrane protein HD_1769 (341 aa).

A run of 3 helical transmembrane segments spans residues 57-77 (LLAV…QCLI), 86-106 (IDLA…GAII), and 204-224 (ENAI…MIAW).

This sequence belongs to the UPF0283 family.

Its subcellular location is the cell inner membrane. The chain is UPF0283 membrane protein HD_1769 from Haemophilus ducreyi (strain 35000HP / ATCC 700724).